Consider the following 366-residue polypeptide: MVKGTNAEQALAREEASSSRPKRQRVPSIVEEEGENGGGDVVVRSGTLFELDLLDCPICCNALTIPIFQCDKGHIACSSCCTNVSNKCPYCSLAIGNYRSRIMERVVEAFIVRCPIVAGEASSSRQKRLRVPSIDEENGENGGRDVVVPSGTLSQLDLLDCPVCSKALKISIFQQSLFLAKRQNGCTETFSYGNELVHEKKCSFALCYCPAPNCNYAGVYKDLYSHYAANHKKLWTRFSCGYSMHVCMDFESKSLVLQQYSDGPLVVLQCFKEPPQGLFWTVNCIAPSAPGVGKFSYELSYSTAGNTLTFRSSEMNRIQKVSFQTPEKDFMFIPEYILCPMGLYKGTYICIRSLEEEEEEEEDNED.

The tract at residues 1–37 is disordered; it reads MVKGTNAEQALAREEASSSRPKRQRVPSIVEEEGENG. An RING-type; degenerate zinc finger spans residues 56–92; sequence CPICCNALTIPIFQCDKGHIACSSCCTNVSNKCPYCS. The SBD stretch occupies residues 106 to 354; it reads VVEAFIVRCP…KGTYICIRSL (249 aa). An SIAH-type; degenerate zinc finger spans residues 109-232; sequence AFIVRCPIVA…LYSHYAANHK (124 aa). Zn(2+) is bound by residues Cys-114, Cys-186, His-198, Cys-202, Cys-209, Cys-214, His-226, and His-231.

The protein belongs to the SINA (Seven in absentia) family.

It carries out the reaction S-ubiquitinyl-[E2 ubiquitin-conjugating enzyme]-L-cysteine + [acceptor protein]-L-lysine = [E2 ubiquitin-conjugating enzyme]-L-cysteine + N(6)-ubiquitinyl-[acceptor protein]-L-lysine.. It functions in the pathway protein modification; protein ubiquitination. In terms of biological role, E3 ubiquitin-protein ligase that mediates ubiquitination and subsequent proteasomal degradation of target proteins. E3 ubiquitin ligases accept ubiquitin from an E2 ubiquitin-conjugating enzyme in the form of a thioester and then directly transfers the ubiquitin to targeted substrates. It probably triggers the ubiquitin-mediated degradation of different substrates. This is E3 ubiquitin-protein ligase SINA-like 1 from Arabidopsis thaliana (Mouse-ear cress).